Reading from the N-terminus, the 774-residue chain is Acetyl-CoA decarbonylase/synthase complex subunit alpha (774 aa).

6 residues coordinate [4Fe-4S] cluster: cysteine 73, cysteine 76, cysteine 77, cysteine 79, cysteine 84, and cysteine 94. Residue histidine 117 participates in CO binding. [Ni-4Fe-4S] cluster-binding residues include histidine 251, cysteine 279, and cysteine 318. 2 4Fe-4S ferredoxin-type domains span residues 398 to 427 (LNEV…VKEA) and 436 to 466 (FKGF…VSMT). The [4Fe-4S] cluster site is built by cysteine 408, cysteine 411, cysteine 414, cysteine 418, cysteine 446, cysteine 449, cysteine 452, and cysteine 456. [Ni-4Fe-4S] cluster-binding residues include cysteine 514, cysteine 543, and cysteine 578.

This sequence belongs to the Ni-containing carbon monoxide dehydrogenase family. As to quaternary structure, heterotetramer of two alpha and two epsilon subunits. The ACDS complex is made up of alpha, epsilon, beta, gamma and delta subunits with a probable stoichiometry of (alpha(2)epsilon(2))(4)-beta(8)-(gamma(1)delta(1))(8). It depends on [4Fe-4S] cluster as a cofactor. The cofactor is [Ni-4Fe-4S] cluster.

The catalysed reaction is CO + 2 oxidized [2Fe-2S]-[ferredoxin] + H2O = 2 reduced [2Fe-2S]-[ferredoxin] + CO2 + 2 H(+). Its function is as follows. Part of the ACDS complex that catalyzes the reversible cleavage of acetyl-CoA, allowing autotrophic growth from CO(2). The alpha-epsilon subcomponent functions as a carbon monoxide dehydrogenase. The polypeptide is Acetyl-CoA decarbonylase/synthase complex subunit alpha (Methanocaldococcus jannaschii (strain ATCC 43067 / DSM 2661 / JAL-1 / JCM 10045 / NBRC 100440) (Methanococcus jannaschii)).